Here is a 440-residue protein sequence, read N- to C-terminus: Diels-Alderase mycB (440 aa).

Positions 1-18 (MGYLVKLACGLLLPLATA) are cleaved as a signal peptide. Residues N80, N155, and N332 are each glycosylated (N-linked (GlcNAc...) asparagine).

This sequence belongs to the Diels-Alderase family.

It carries out the reaction (5S)-5-(2-methylpropyl)-3-[(2E,6R,8E,10E,12E)-6,8,10,12-tetramethyltetradeca-2,8,10,12-tetraenoyl]-2,5-dihydro-1H-pyrrol-2-one = (5S)-3-[(1S,2R,4aR,6R,8aS)-2-(but-2-en-2-yl)-3,4a,6-trimethyl-1,2,4a,5,6,7,8,8a-octahydronaphthalene-1-carbonyl]-5-(2-methylpropyl)-2,5-dihydro-1H-pyrrol-2-one. It catalyses the reaction (5Z)-5-(2-methylpropylidene)-3-[(2E,6R,8E,10E,12E)-6,8,10,12-tetramethyltetradeca-2,8,10,12-tetraenoyl]-2,5-dihydro-1H-pyrrol-2-one = myceliothermophin E. The protein operates within mycotoxin biosynthesis. Its function is as follows. Diels-Alderase; part of the gene cluster that mediates the biosynthesis of myceliothermophins, mycotoxins that contain a trans-fused decalin ring system connected to a conjugated 3-pyrrolin-2-one moiety and that have potential anti-tumor properties. The polyketide synthase module (PKS) of the PKS-NRPS mycA is responsible for the synthesis of the octaketide backbone. The downstream nonribosomal peptide synthetase (NRPS) module then amidates the carboxyl end of the octaketide with a leucine. A reductase-like domain (R) at the C-terminus catalyzes the reductive release of the polyketide-amino acid intermediate. Because mycA lacks a designated enoylreductase (ER) domain, the required activity is provided the enoyl reductase mycC. Following mycA-catalyzed construction and release of aminoacyl polyketide aldehyde, Knoevenagel condensation yields the expected ketone. This C18 keto acyclic precursor is the substrate of the Diels-Alderase mycB, that catalyzes the Diels-Alder cycloaddition to produce myceliothermophin E. A yet unknown oxygenase involved in the production of myceliothermophin A, via substitution with a hydroxyl group at the C21, has still to be identified. The chain is Diels-Alderase mycB from Thermothelomyces thermophilus (strain ATCC 42464 / BCRC 31852 / DSM 1799) (Sporotrichum thermophile).